We begin with the raw amino-acid sequence, 544 residues long: E3 ubiquitin-protein ligase makorin-3 (544 aa).

2 disordered regions span residues 1–46 (MEES…VSSA) and 117–144 (DLSG…KMAT). Composition is skewed to low complexity over residues 9 to 19 (EAHAAAGAEAG) and 36 to 46 (AAGASAGVSSA). 2 C3H1-type zinc fingers span residues 92-119 (WTKQ…HDLS) and 274-301 (PMPL…HGEI). Positions 302 to 329 (CDMCGQQALHPWDAAQQEAHRRACVEAH) are makorin-type Cys-His. The RING-type zinc finger occupies 347-401 (CGICMEVVYEKADPSDRRFGILFSCNHTYCLRCIRRWRSATQFENRISKSCPQCR). The C3H1-type 3 zinc finger occupies 430–459 (GMSQKACRYFAGGLGHCPFGEFCFYKHEYP).

As to expression, mainly expressed in mouse brain and reproductive system including testis and ovary. Ubiquitously detected at low levels throughout the entire embryo, but expression is highest in the ventricular layers of the brain.

It is found in the nucleus. It carries out the reaction S-ubiquitinyl-[E2 ubiquitin-conjugating enzyme]-L-cysteine + [acceptor protein]-L-lysine = [E2 ubiquitin-conjugating enzyme]-L-cysteine + N(6)-ubiquitinyl-[acceptor protein]-L-lysine.. Its pathway is protein modification; protein ubiquitination. Functionally, E3 ubiquitin ligase catalyzing the covalent attachment of ubiquitin moieties onto substrate proteins. Acts as a key developmental timer that helps ensure puberty begins at the appropriate age, by inhibiting premature activation of the reproductive hormone cascade. Epigenetically regulates GNRH1 transcription by disrupting the binding of methyl-DNA binding protein 3/MBD3 to the promoter of GNRH1. Mechanistically, mediates the non-proteolytic ubiquitination of MBD3 at multiple sites with 'Lys27' ubiquitin linkages and thereby regulates the methylation status of the genome, including GNRH1 promoter. Modulates the stability and translation of GNRH1 mRNA by mediating the non-proteolytic ubiquitination of PABP family members PABPC1, PABPC3 and PABPC4 at multiple sites. Also participates in the maintenance of genomic and epigenomic stability by regulating the abundance of APEX2 via 'Lys-48'-linked ubiquitination. The sequence is that of E3 ubiquitin-protein ligase makorin-3 (Mkrn3) from Mus musculus (Mouse).